The sequence spans 89 residues: Abortive infection protein (89 aa).

Its subcellular location is the cell membrane. Functionally, ABI may interact with a target in the cell membrane, which could be the product of the host's cmrA gene, and cause disruption of the cellular membrane such that lysis of the infected cell and death of the infecting phage would result. The protein is Abortive infection protein (abi) of Escherichia coli.